Reading from the N-terminus, the 43-residue chain is Bacteriocin weissellin-A (43 aa).

Cys-9 and Cys-14 are disulfide-bonded.

It localises to the secreted. In terms of biological role, highly active against Gram-positive bacteria M.flavus strain ATCC 400, M.luteus strain CECT241, C.soprogenes strain NCTC533, L.monocytogenes strain ATCC 19111, L.inocua strain ATCC BAA-680D and S.carnosus strain LMG13564. Less active against B.cereus strain LMG13569, C.thiaminolyticum strain ATCC 15579, E.faecalis strain NCTC8176, L.lactis strain LM0230, L.casei strain ATCC 344, L.lactis strain IL1403, L.jensenii strain ATCC 25258, L.plantarum strain CECT220, L.brevis strain ATCC 8287, L.bulgaricus strain LMG13551, P.acidilactici strain ATCC 25740, P.pentosaceus strain ATCC 33316 and P.pentosaceus strain LMG13560. Weakly active against L.mesenteroides strain ATCC 19254, L.lactis strain ATCC 1454, L.sakei strain CECT906T, L.lactis subsp. cremoris strain MC1363 and L.curvatus strain ATCC 51436. Not active against Gram-negative bacterium S.enteritidis strain ATCC 13076. The mode of action appears to be non-lytic. Inactivated by proteinase K, but insensitive to trypsin, alpha-chymotrypsin, pepsin and papain. This chain is Bacteriocin weissellin-A, found in Weissella paramesenteroides (Leuconostoc paramesenteroides).